The following is a 269-amino-acid chain: Phosphonoacetaldehyde hydrolase (269 aa).

D10 functions as the Nucleophile in the catalytic mechanism. 2 residues coordinate Mg(2+): D10 and A12. The Schiff-base intermediate with substrate role is filled by K52. Residue D186 participates in Mg(2+) binding.

This sequence belongs to the HAD-like hydrolase superfamily. PhnX family. Homodimer. The cofactor is Mg(2+).

It catalyses the reaction phosphonoacetaldehyde + H2O = acetaldehyde + phosphate + H(+). Functionally, involved in phosphonate degradation. This chain is Phosphonoacetaldehyde hydrolase, found in Salmonella agona (strain SL483).